A 405-amino-acid chain; its full sequence is Probable tRNA sulfurtransferase (405 aa).

Residues 60–165 (EGVIERLRHV…QDAIYLTNQV (106 aa)) enclose the THUMP domain. ATP is bound by residues 183–184 (ML), 208–209 (HF), Arg265, Gly287, and Gln296.

It belongs to the ThiI family.

It localises to the cytoplasm. The catalysed reaction is [ThiI sulfur-carrier protein]-S-sulfanyl-L-cysteine + a uridine in tRNA + 2 reduced [2Fe-2S]-[ferredoxin] + ATP + H(+) = [ThiI sulfur-carrier protein]-L-cysteine + a 4-thiouridine in tRNA + 2 oxidized [2Fe-2S]-[ferredoxin] + AMP + diphosphate. The enzyme catalyses [ThiS sulfur-carrier protein]-C-terminal Gly-Gly-AMP + S-sulfanyl-L-cysteinyl-[cysteine desulfurase] + AH2 = [ThiS sulfur-carrier protein]-C-terminal-Gly-aminoethanethioate + L-cysteinyl-[cysteine desulfurase] + A + AMP + 2 H(+). The protein operates within cofactor biosynthesis; thiamine diphosphate biosynthesis. In terms of biological role, catalyzes the ATP-dependent transfer of a sulfur to tRNA to produce 4-thiouridine in position 8 of tRNAs, which functions as a near-UV photosensor. Also catalyzes the transfer of sulfur to the sulfur carrier protein ThiS, forming ThiS-thiocarboxylate. This is a step in the synthesis of thiazole, in the thiamine biosynthesis pathway. The sulfur is donated as persulfide by IscS. The sequence is that of Probable tRNA sulfurtransferase from Latilactobacillus sakei subsp. sakei (strain 23K) (Lactobacillus sakei subsp. sakei).